We begin with the raw amino-acid sequence, 190 residues long: Transcription factor bHLH162 (190 aa).

A compositionally biased stretch (polar residues) spans 1 to 12 (MEPSHSNTGQSR). A disordered region spans residues 1 to 21 (MEPSHSNTGQSRSVDRKTVEK). A bHLH domain is found at 11–63 (SRSVDRKTVEKNRRMQMKSLYSELISLLPHHSSTEPLTLPDQLDEAANYIKKL).

It belongs to the bHLH protein family.

The protein localises to the nucleus. The protein is Transcription factor bHLH162 of Arabidopsis thaliana (Mouse-ear cress).